A 22-amino-acid polypeptide reads, in one-letter code: PVLQVVRDIHGDILTPDSRYIL.

The protein belongs to the protease inhibitor I3 (leguminous Kunitz-type inhibitor) family. In terms of tissue distribution, tubers.

The protein localises to the vacuole. Functionally, inhibitor of papain (cysteine protease). Does not inhibit trypsin, chymotrypsin nor elastase (serine proteases). May protect the plant by inhibiting proteases of invading organisms. This Solanum tuberosum (Potato) protein is Cysteine protease inhibitor 4.